A 353-amino-acid polypeptide reads, in one-letter code: Lactosylceramide 4-alpha-galactosyltransferase (353 aa).

Residues 1–22 (MSKPPDLLLRLLRGAPRQRVCT) lie on the Cytoplasmic side of the membrane. The helical; Signal-anchor for type II membrane protein transmembrane segment at 23-43 (LFIIGFKFTFFVSIMIYWHVV) threads the bilayer. Topologically, residues 44 to 353 (GEPKEKGQLY…TTHEAMKMYL (310 aa)) are lumenal. Asn121 carries an N-linked (GlcNAc...) asparagine glycan. The DXD motif motif lies at 192–194 (DTD). The N-linked (GlcNAc...) asparagine glycan is linked to Asn203.

The protein belongs to the glycosyltransferase 32 family.

It localises to the golgi apparatus membrane. The enzyme catalyses a beta-D-Gal-(1-&gt;4)-beta-D-Glc-(1&lt;-&gt;1)-Cer(d18:1(4E)) + UDP-alpha-D-galactose = a globoside Gb3Cer (d18:1(4E)) + UDP + H(+). It catalyses the reaction a beta-D-Gal-(1&lt;-&gt;1')-ceramide + UDP-alpha-D-galactose = alpha-D-Gal-(1-&gt;4)-beta-D-Gal-(1&lt;-&gt;1')-Cer + UDP + H(+). The protein operates within glycolipid biosynthesis. Its function is as follows. Catalyzes the transfer of galactose from UDP-alpha-D-galactose to lactosylceramide/beta-D-galactosyl-(1-&gt;4)-beta-D-glucosyl-(1&lt;-&gt;1)-ceramide(d18:1(4E)) to produce globotriaosylceramide/globoside Gb3Cer (d18:1(4E)). Also able to transfer galactose to galactosylceramide/beta-D-Gal-(1&lt;-&gt;1')-Cer. Globoside Gb3Cer is a glycosphingolipid of the globo serie, one of the major types of neutral root structures of glycosphingolipids, that constitute a significant portion of mammalian cell membranes. In Pan troglodytes (Chimpanzee), this protein is Lactosylceramide 4-alpha-galactosyltransferase (A4GALT).